The chain runs to 643 residues: MERSPPQSPGPGKAGDAPNRRSGHVRGARVLSPPGRRARLSSPGPSRSSEAREELRRHLVGLIERSRVVIFSKSYCPHSTRVKELFSSLGVECNVLELDQVDDGARVQEVLSEITNQKTVPNIFVNKVHVGGCDQTFQAYQSGLLQKLLQEDLAYDYDLIIIGGGSGGLSCAKEAAILGKKVMVLDFVVPSPQGTSWGLGGTCVNVGCIPKKLMHQAALLGQALCDSRKFGWEYNQQVRHNWETMTKAIQNHISSLNWGYRLSLREKAVAYVNSYGEFVEHHKIKATNKKGQETYYTAAQFVIATGERPRYLGIQGDKEYCITSDDLFSLPYCPGKTLVVGASYVALECAGFLAGFGLDVTVMVRSILLRGFDQEMAEKVGSYMEQHGVKFLRKFIPVMVQQLEKGSPGKLKVLAKSTEGTETIEGVYNTVLLAIGRDSCTRKIGLEKIGVKINEKSGKIPVNDVEQTNVPYVYAVGDILEDKPELTPVAIQSGKLLAQRLFGASLEKCDYINVPTTVFTPLEYGCCGLSEEKAIEVYKKENLEIYHTLFWPLEWTVAGRENNTCYAKIICNKFDHDRVIGFHILGPNAGEVTQGFAAAMKCGLTKQLLDDTIGIHPTCGEVFTTLEITKSSGLDITQKGCUG.

Residues 1-53 (MERSPPQSPGPGKAGDAPNRRSGHVRGARVLSPPGRRARLSSPGPSRSSEARE) are disordered. Residue arginine 26 is modified to Asymmetric dimethylarginine; alternate. At arginine 26 the chain carries Omega-N-methylarginine; alternate. Phosphoserine is present on residues serine 41 and serine 42. Residues 56–156 (RRHLVGLIER…KLLQEDLAYD (101 aa)) enclose the Glutaredoxin domain. 158-187 (DLIIIGGGSGGLSCAKEAAILGKKVMVLDF) is a binding site for FAD. A disulfide bond links cysteine 203 and cysteine 208. Lysine 379 bears the N6-succinyllysine mark. Histidine 616 acts as the Proton acceptor in catalysis. Residues 641 to 642 (CU) constitute a cross-link (cysteinyl-selenocysteine (Cys-Sec)). Position 642 (selenocysteine 642) is a non-standard amino acid, selenocysteine.

The protein belongs to the class-I pyridine nucleotide-disulfide oxidoreductase family. Homodimer. Requires FAD as cofactor.

The protein resides in the cytoplasm. It is found in the nucleus. It localises to the microsome. The protein localises to the endoplasmic reticulum. The catalysed reaction is [thioredoxin]-dithiol + NADP(+) = [thioredoxin]-disulfide + NADPH + H(+). Its function is as follows. Displays thioredoxin reductase, glutaredoxin and glutathione reductase activities. Catalyzes disulfide bond isomerization. Promotes disulfide bond formation between GPX4 and various sperm proteins and may play a role in sperm maturation by promoting formation of sperm structural components. This Homo sapiens (Human) protein is Thioredoxin reductase 3.